The chain runs to 443 residues: Xaa-Pro dipeptidase (443 aa).

Asp-246, Asp-257, His-339, Glu-384, and Glu-423 together coordinate Mn(2+).

This sequence belongs to the peptidase M24B family. Bacterial-type prolidase subfamily. Mn(2+) serves as cofactor.

The catalysed reaction is Xaa-L-Pro dipeptide + H2O = an L-alpha-amino acid + L-proline. Functionally, splits dipeptides with a prolyl residue in the C-terminal position. The sequence is that of Xaa-Pro dipeptidase from Salmonella arizonae (strain ATCC BAA-731 / CDC346-86 / RSK2980).